Here is a 750-residue protein sequence, read N- to C-terminus: Photosystem I P700 chlorophyll a apoprotein A1 (750 aa).

Helical transmembrane passes span 70–93 (VFSAHFGQLSIIFLWLSGMYFHGA), 156–179 (LYCTAIGALIFASLMLFAGWFHYH), 195–219 (LNHHLAGLLGLGSLSWAGHQIHVSL), 291–309 (IAHHHLAIAILFLIAGHMY), 346–369 (WHAQLSLNLAMLGSTTIVVAHHMY), 385–411 (LSLFTHHMWIGGFLIVGAAAHAAIFMV), 433–455 (AIISHLNWVCIFLGFHSFGLYIH), and 531–549 (FLVHHIHAFTIHVTVLILL). The [4Fe-4S] cluster site is built by cysteine 573 and cysteine 582. A run of 2 helical transmembrane segments spans residues 589–610 (HVFLGLFWMYNSISVVIFHFSW) and 664–686 (LSAYGLFFLGAHFVWAFSLMFLF). Histidine 675 contacts chlorophyll a'. Residues methionine 683 and tyrosine 691 each contribute to the chlorophyll a site. Tryptophan 692 contributes to the phylloquinone binding site. The helical transmembrane segment at 724–744 (AVGVTHYLLGGIATTWAFFLA) threads the bilayer.

Belongs to the PsaA/PsaB family. As to quaternary structure, the PsaA/B heterodimer binds the P700 chlorophyll special pair and subsequent electron acceptors. PSI consists of a core antenna complex that captures photons, and an electron transfer chain that converts photonic excitation into a charge separation. The eukaryotic PSI reaction center is composed of at least 11 subunits. P700 is a chlorophyll a/chlorophyll a' dimer, A0 is one or more chlorophyll a, A1 is one or both phylloquinones and FX is a shared 4Fe-4S iron-sulfur center. is required as a cofactor.

The protein localises to the plastid. Its subcellular location is the chloroplast thylakoid membrane. The enzyme catalyses reduced [plastocyanin] + hnu + oxidized [2Fe-2S]-[ferredoxin] = oxidized [plastocyanin] + reduced [2Fe-2S]-[ferredoxin]. Functionally, psaA and PsaB bind P700, the primary electron donor of photosystem I (PSI), as well as the electron acceptors A0, A1 and FX. PSI is a plastocyanin-ferredoxin oxidoreductase, converting photonic excitation into a charge separation, which transfers an electron from the donor P700 chlorophyll pair to the spectroscopically characterized acceptors A0, A1, FX, FA and FB in turn. Oxidized P700 is reduced on the lumenal side of the thylakoid membrane by plastocyanin. The polypeptide is Photosystem I P700 chlorophyll a apoprotein A1 (Saccharum hybrid (Sugarcane)).